The primary structure comprises 48 residues: MPQLVPFYFTNLLTFGMLAISMLLYLVSTIILPNILRLLVARTTMTKL.

Residues 12–32 (LLTFGMLAISMLLYLVSTIIL) form a helical membrane-spanning segment.

This sequence belongs to the ATPase protein 8 family. In terms of assembly, F-type ATPases have 2 components, CF(1) - the catalytic core - and CF(0) - the membrane proton channel.

It localises to the mitochondrion membrane. Functionally, mitochondrial membrane ATP synthase (F(1)F(0) ATP synthase or Complex V) produces ATP from ADP in the presence of a proton gradient across the membrane which is generated by electron transport complexes of the respiratory chain. F-type ATPases consist of two structural domains, F(1) - containing the extramembraneous catalytic core and F(0) - containing the membrane proton channel, linked together by a central stalk and a peripheral stalk. During catalysis, ATP synthesis in the catalytic domain of F(1) is coupled via a rotary mechanism of the central stalk subunits to proton translocation. Part of the complex F(0) domain. Minor subunit located with subunit a in the membrane. The sequence is that of ATP synthase protein 8 (ATP8) from Debaryomyces hansenii (strain ATCC 36239 / CBS 767 / BCRC 21394 / JCM 1990 / NBRC 0083 / IGC 2968) (Yeast).